The primary structure comprises 478 residues: Ribulose bisphosphate carboxylase large chain (478 aa).

The propeptide occupies 1–2 (MS). An N-acetylproline modification is found at P3. K14 is modified (N6,N6,N6-trimethyllysine). Substrate is bound by residues N123 and T173. The Proton acceptor role is filled by K175. Residue K177 coordinates substrate. Positions 201, 203, and 204 each coordinate Mg(2+). K201 is modified (N6-carboxylysine). H294 (proton acceptor) is an active-site residue. Substrate contacts are provided by R295, H327, and S379.

The protein belongs to the RuBisCO large chain family. Type I subfamily. In terms of assembly, heterohexadecamer of 8 large chains and 8 small chains; disulfide-linked. The disulfide link is formed within the large subunit homodimers. It depends on Mg(2+) as a cofactor. In terms of processing, the disulfide bond which can form in the large chain dimeric partners within the hexadecamer appears to be associated with oxidative stress and protein turnover.

It is found in the plastid. The protein localises to the chloroplast. The enzyme catalyses 2 (2R)-3-phosphoglycerate + 2 H(+) = D-ribulose 1,5-bisphosphate + CO2 + H2O. The catalysed reaction is D-ribulose 1,5-bisphosphate + O2 = 2-phosphoglycolate + (2R)-3-phosphoglycerate + 2 H(+). Its function is as follows. RuBisCO catalyzes two reactions: the carboxylation of D-ribulose 1,5-bisphosphate, the primary event in carbon dioxide fixation, as well as the oxidative fragmentation of the pentose substrate in the photorespiration process. Both reactions occur simultaneously and in competition at the same active site. The polypeptide is Ribulose bisphosphate carboxylase large chain (Neurachne tenuifolia).